A 1219-amino-acid chain; its full sequence is NHS-like protein 2 (1219 aa).

Disordered stretches follow at residues 162 to 181 (FRSS…QSAK), 288 to 321 (FSNF…HSAP), 336 to 364 (FPSL…SDHP), 400 to 423 (TPSA…GNSW), 474 to 591 (GLLA…ELVL), 669 to 741 (QGSS…SASV), 854 to 938 (GAEE…STAS), 979 to 1003 (IGLQ…KKPS), 1033 to 1087 (LEED…DKTA), and 1121 to 1197 (WKET…KTTN). Over residues 288-312 (FSNFSQRDQGHSSSPTGSLARSATS) the composition is skewed to polar residues. The segment covering 352 to 364 (GDAHQARSASDHP) has biased composition (basic and acidic residues). At Ser-499 the chain carries Phosphoserine. Polar residues predominate over residues 526–545 (ASTSSEGSNSTDNIAALSTE). The span at 549-567 (RHRRQRSKSISLKKAKKKP) shows a compositional bias: basic residues. Phosphoserine is present on Ser-575. Positions 674 to 687 (SLASPSTSRATTPS) are enriched in low complexity. Residue Ser-690 is modified to Phosphoserine. Composition is skewed to polar residues over residues 708–729 (MSPS…SMSL) and 897–908 (TSPTMAMASRSS). At Ser-1048 the chain carries Phosphoserine. A compositionally biased stretch (basic and acidic residues) spans 1076 to 1087 (AEEKSLISDKTA). Polar residues predominate over residues 1131-1144 (SKPSSHSPVKNTAD). Residues 1145–1160 (SPTGEAAAAPGPSSSA) show a composition bias toward low complexity. Ser-1208 carries the phosphoserine modification.

The protein belongs to the NHS family.

In Mus musculus (Mouse), this protein is NHS-like protein 2.